Here is a 501-residue protein sequence, read N- to C-terminus: Ribose import ATP-binding protein RbsA (501 aa).

ABC transporter domains are found at residues 8–245 (LKMV…VGRT) and 255–500 (VKKG…VGIN). An ATP-binding site is contributed by 40–47 (GENGAGKS).

It belongs to the ABC transporter superfamily. Ribose importer (TC 3.A.1.2.1) family. The complex is composed of an ATP-binding protein (RbsA), two transmembrane proteins (RbsC) and a solute-binding protein (RbsB).

Its subcellular location is the cell membrane. It carries out the reaction D-ribose(out) + ATP + H2O = D-ribose(in) + ADP + phosphate + H(+). Functionally, part of the ABC transporter complex RbsABC involved in ribose import. Responsible for energy coupling to the transport system. The sequence is that of Ribose import ATP-binding protein RbsA from Clostridium perfringens (strain SM101 / Type A).